The primary structure comprises 283 residues: Prepilin leader peptidase/N-methyltransferase (283 aa).

7 consecutive transmembrane segments (helical) span residues 13-33, 106-126, 128-148, 153-173, 176-196, 216-236, and 259-279; these read VWLL…NVVI, WRYP…GLLW, PGLA…LAAI, QLLP…FNLA, FVPL…LWLI, LLAA…VLIA, and LAFG…NVLG.

Belongs to the peptidase A24 family.

It is found in the cell inner membrane. The catalysed reaction is Typically cleaves a -Gly-|-Phe- bond to release an N-terminal, basic peptide of 5-8 residues from type IV prepilin, and then N-methylates the new N-terminal amino group, the methyl donor being S-adenosyl-L-methionine.. Plays a role in type II pseudopili formation by proteolytically removing the leader sequence from substrate proteins and subsequently monomethylating the alpha-amino group of the newly exposed N-terminal phenylalanine. Substrates include proteins required for biogenesis of the type II general secretory apparatus. This is Prepilin leader peptidase/N-methyltransferase (outO) from Dickeya chrysanthemi (Pectobacterium chrysanthemi).